We begin with the raw amino-acid sequence, 327 residues long: Serpentine receptor class alpha-12 (327 aa).

Over 1–18 (MGCASEIQAEIFTSFGQL) the chain is Extracellular. Residues 19–39 (FYASFQTILFLATIIGSLLAI) traverse the membrane as a helical segment. Residues 40 to 53 (FELCKKTTVPDSTR) are Cytoplasmic-facing. Residues 54–74 (VLLIGSLFFANAHEFAYFTAP) traverse the membrane as a helical segment. At 75-98 (LKVFQLNIFNTNTSCYPLISTRDC) the chain is on the extracellular side. The chain crosses the membrane as a helical span at residues 99 to 119 (IPTTTVLAMGISGNMLIQSAL). The Cytoplasmic portion of the chain corresponds to 120 to 138 (SIDRLLATIFPFSYSRMRA). The chain crosses the membrane as a helical span at residues 139-159 (LPGFVLLIMVLIPAMFTYSWI). At 160-185 (RLDIVLDDYQMFCSQWSANISTRANT) the chain is on the extracellular side. The helical transmembrane segment at 186-206 (FLEICSYLTVAHIIINCLIIL) threads the bilayer. At 207–234 (RNRAIEKRCRFDVTQRYLTSENLKTTQA) the chain is on the cytoplasmic side. A helical transmembrane segment spans residues 235–255 (ICYLSIAQFLAMFMYSGGVLL). Residues 256 to 270 (MRKNRENIPTLIYFN) are Extracellular-facing. Residues 271–291 (VIVWVYAPPYACVSLAPLILF) form a helical membrane-spanning segment. The Cytoplasmic portion of the chain corresponds to 292-327 (SLWNLKKQRHIQIKSVQSAQKETQDDYIRKLQKSWK).

This sequence belongs to the nematode receptor-like protein sra family. Expressed in neurons RIF/RIG and PVT.

It localises to the membrane. This chain is Serpentine receptor class alpha-12 (sra-12), found in Caenorhabditis elegans.